The sequence spans 189 residues: Protein GrpE (189 aa).

Over residues 1-14 the composition is skewed to basic and acidic residues; it reads MTEKNEEVVEDKNI. Residues 1-38 form a disordered region; sequence MTEKNEEVVEDKNISDQTDENLTEEIESEADDLQVEPD. Residues 17 to 35 are compositionally biased toward acidic residues; it reads QTDENLTEEIESEADDLQV.

Belongs to the GrpE family. In terms of assembly, homodimer.

The protein localises to the cytoplasm. In terms of biological role, participates actively in the response to hyperosmotic and heat shock by preventing the aggregation of stress-denatured proteins, in association with DnaK and GrpE. It is the nucleotide exchange factor for DnaK and may function as a thermosensor. Unfolded proteins bind initially to DnaJ; upon interaction with the DnaJ-bound protein, DnaK hydrolyzes its bound ATP, resulting in the formation of a stable complex. GrpE releases ADP from DnaK; ATP binding to DnaK triggers the release of the substrate protein, thus completing the reaction cycle. Several rounds of ATP-dependent interactions between DnaJ, DnaK and GrpE are required for fully efficient folding. In Leuconostoc mesenteroides subsp. mesenteroides (strain ATCC 8293 / DSM 20343 / BCRC 11652 / CCM 1803 / JCM 6124 / NCDO 523 / NBRC 100496 / NCIMB 8023 / NCTC 12954 / NRRL B-1118 / 37Y), this protein is Protein GrpE.